A 221-amino-acid polypeptide reads, in one-letter code: Ribonuclease T (221 aa).

An Exonuclease domain is found at 21 to 195 (VVVDVETAGF…YDAEKTADLF (175 aa)). Mg(2+) is bound by residues Asp24, Glu26, His182, and Asp187. His182 acts as the Proton donor/acceptor in catalysis.

The protein belongs to the RNase T family. In terms of assembly, homodimer. The cofactor is Mg(2+).

In terms of biological role, trims short 3' overhangs of a variety of RNA species, leaving a one or two nucleotide 3' overhang. Responsible for the end-turnover of tRNA: specifically removes the terminal AMP residue from uncharged tRNA (tRNA-C-C-A). Also appears to be involved in tRNA biosynthesis. This chain is Ribonuclease T, found in Marinobacter nauticus (strain ATCC 700491 / DSM 11845 / VT8) (Marinobacter aquaeolei).